Consider the following 375-residue polypeptide: Pulmonary surfactant-associated protein D (375 aa).

Positions 1-21 (MLLFLLSALVLLTQSLGYLEA) are cleaved as a signal peptide. S-nitrosocysteine occurs at positions 35 and 40. The disordered stretch occupies residues 43–221 (VESGLPGRDG…DKGAKGESGL (179 aa)). A Collagen-like domain is found at 46–222 (GLPGRDGRDG…KGAKGESGLP (177 aa)). The segment covering 50–65 (RDGRDGREGPRGEKGD) has biased composition (basic and acidic residues). Proline 78 is modified (4-hydroxyproline). Lysine 87 carries the post-translational modification 5-hydroxylysine. Asparagine 90 is a glycosylation site (N-linked (GlcNAc...) asparagine). The residue at position 96 (proline 96) is a 4-hydroxyproline. Lysine 99 carries the post-translational modification 5-hydroxylysine. Over residues 105-114 (SGPPGPPGVP) the composition is skewed to pro residues. Composition is skewed to low complexity over residues 116-132 (PAGREGPLGKQGNIGPQ) and 138-150 (KGEAGPKGEVGAP). 2 positions are modified to 4-hydroxyproline: proline 171 and proline 177. Low complexity predominate over residues 173–189 (ERGAPGNAGAAGSAGVM). Basic and acidic residues predominate over residues 204-216 (KGDKGVPGDKGAK). A coiled-coil region spans residues 223–251 (DVASLRQQVEALQKQVQHLQAAFSQYKKV). The C-type lectin domain occupies 260–374 (VGEKIFKTAG…CGEKRLVVCE (115 aa)). Intrachain disulfides connect cysteine 281/cysteine 373 and cysteine 351/cysteine 365.

Belongs to the SFTPD family. In terms of assembly, oligomeric complex of 4 set of homotrimers. Hydroxylation on proline residues within the sequence motif, GXPG, is most likely to be 4-hydroxy as this fits the requirement for 4-hydroxylation in vertebrates. Post-translationally, S-nitrosylation at Cys-35 and Cys-40 alters the quaternary structure which results in a pro-inflammatory chemoattractive signaling activity with macrophages.

It is found in the secreted. It localises to the extracellular space. The protein localises to the extracellular matrix. The protein resides in the surface film. Its function is as follows. Contributes to the lung's defense against inhaled microorganisms, organic antigens and toxins. Interacts with compounds such as bacterial lipopolysaccharides, oligosaccharides and fatty acids and modulates leukocyte action in immune response. May participate in the extracellular reorganization or turnover of pulmonary surfactant. Binds strongly maltose residues and to a lesser extent other alpha-glucosyl moieties. The chain is Pulmonary surfactant-associated protein D (SFTPD) from Macaca mulatta (Rhesus macaque).